Reading from the N-terminus, the 447-residue chain is Na(+)-translocating NADH-quinone reductase subunit A (447 aa).

It belongs to the NqrA family. In terms of assembly, composed of six subunits; NqrA, NqrB, NqrC, NqrD, NqrE and NqrF.

It catalyses the reaction a ubiquinone + n Na(+)(in) + NADH + H(+) = a ubiquinol + n Na(+)(out) + NAD(+). Its function is as follows. NQR complex catalyzes the reduction of ubiquinone-1 to ubiquinol by two successive reactions, coupled with the transport of Na(+) ions from the cytoplasm to the periplasm. NqrA to NqrE are probably involved in the second step, the conversion of ubisemiquinone to ubiquinol. This Cellvibrio japonicus (strain Ueda107) (Pseudomonas fluorescens subsp. cellulosa) protein is Na(+)-translocating NADH-quinone reductase subunit A.